Consider the following 187-residue polypeptide: Elongation factor P (187 aa).

The protein belongs to the elongation factor P family.

It localises to the cytoplasm. It functions in the pathway protein biosynthesis; polypeptide chain elongation. Functionally, involved in peptide bond synthesis. Stimulates efficient translation and peptide-bond synthesis on native or reconstituted 70S ribosomes in vitro. Probably functions indirectly by altering the affinity of the ribosome for aminoacyl-tRNA, thus increasing their reactivity as acceptors for peptidyl transferase. This Leifsonia xyli subsp. xyli (strain CTCB07) protein is Elongation factor P.